A 223-amino-acid polypeptide reads, in one-letter code: Glucosyl-3-phosphoglycerate phosphatase (223 aa).

Residue arginine 10 coordinates substrate. Histidine 11 serves as the catalytic Tele-phosphohistidine intermediate. An Isoglutamyl lysine isopeptide (Lys-Gln) (interchain with Q-Cter in protein Pup) cross-link involves residue lysine 47. Arginine 60 serves as a coordination point for substrate. Glutamate 84 acts as the Proton donor/acceptor in catalysis. Histidine 159 provides a ligand contact to substrate.

The protein belongs to the phosphoglycerate mutase family. Homodimer. Dimerization of the enzyme is essential for its dephosphorylation activity.

It catalyses the reaction (2R)-2-O-(alpha-D-glucopyranosyl)-3-phospho-glycerate + H2O = (2R)-2-O-(alpha-D-glucopyranosyl)-glycerate + phosphate. The enzyme catalyses 2-O-(alpha-D-mannosyl)-3-phosphoglycerate + H2O = (2R)-2-O-(alpha-D-mannosyl)-glycerate + phosphate. The catalysed reaction is (2R)-2-O-[alpha-D-mannopyranosyl-(1-&gt;2)-alpha-D-glucopyranosyl]-3-phospho-glycerate + H2O = (2R)-2-O-[alpha-D-mannopyranosyl-(1-&gt;2)-alpha-D-glucopyranosyl]-glycerate + phosphate. With respect to regulation, progressively inhibited by cobalt ions at concentrations between 10-50 mM and by copper ions at any concentration between 1-50 mM. Functionally, involved in the biosynthesis of mycobacterial methylglucose lipopolysaccharides (MGLPs). Catalyzes the dephosphorylation of glucosyl-3-phosphoglycerate (GPG) to glucosylglycerate (GG). GPG is the preferred substrate, but GpgP also exhibits low dephosphorylation activity on mannosyl-3-phosphoglycerate (MPG) and mannosylglucosyl-3-phosphoglycerate (MGPG) in vitro. Shows only trace of phosphoglycerate mutase (PGM) activity. The protein is Glucosyl-3-phosphoglycerate phosphatase of Mycobacterium tuberculosis (strain ATCC 25618 / H37Rv).